The primary structure comprises 105 residues: Thioredoxin (105 aa).

In terms of domain architecture, Thioredoxin spans 2 to 105 (VKQIESKTAF…KLEATINELV (104 aa)). Lys-3 carries the N6-acetyllysine modification. Lys-8 carries the N6-succinyllysine modification. Residues Cys-32 and Cys-35 each act as nucleophile in the active site. Cys-32 and Cys-35 are joined by a disulfide. An N6-acetyllysine modification is found at Lys-39. Cys-62 and Cys-69 each carry S-nitrosocysteine. Position 73 is an S-nitrosocysteine; alternate (Cys-73). Position 94 is an N6-acetyllysine; alternate (Lys-94). Residue Lys-94 is modified to N6-succinyllysine; alternate.

It belongs to the thioredoxin family. Homodimer; disulfide-linked. Interacts with TXNIP through the redox-active site. Interacts with MAP3K5 and CASP3. In case of infection, interacts with S.typhimurium protein slrP. Interacts with APEX1; the interaction stimulates the FOS/JUN AP-1 DNA-binding activity in a redox-dependent manner. In the fully reduced protein, both Cys-69 and Cys-73 are nitrosylated in response to nitric oxide (NO). When two disulfide bonds are present in the protein, only Cys-73 is nitrosylated. Cys-73 can serve as donor for nitrosylation of target proteins. In terms of processing, in case of infection, ubiquitinated by S.typhimurium protein slrP, leading to its degradation.

The protein resides in the nucleus. Its subcellular location is the cytoplasm. The protein localises to the secreted. Its function is as follows. Participates in various redox reactions through the reversible oxidation of its active center dithiol to a disulfide and catalyzes dithiol-disulfide exchange reactions. Plays a role in the reversible S-nitrosylation of cysteine residues in target proteins, and thereby contributes to the response to intracellular nitric oxide. Nitrosylates the active site Cys of CASP3 in response to nitric oxide (NO), and thereby inhibits caspase-3 activity. Induces the FOS/JUN AP-1 DNA-binding activity in ionizing radiation (IR) cells through its oxidation/reduction status and stimulates AP-1 transcriptional activity. In terms of biological role, ADF augments the expression of the interleukin-2 receptor TAC (IL2R/P55). The protein is Thioredoxin (TXN) of Homo sapiens (Human).